A 316-amino-acid chain; its full sequence is 4-hydroxy-3-methylbut-2-enyl diphosphate reductase (316 aa).

Cys12 contacts [4Fe-4S] cluster. (2E)-4-hydroxy-3-methylbut-2-enyl diphosphate-binding residues include His41 and His74. Dimethylallyl diphosphate-binding residues include His41 and His74. Isopentenyl diphosphate contacts are provided by His41 and His74. Cys96 contributes to the [4Fe-4S] cluster binding site. His124 lines the (2E)-4-hydroxy-3-methylbut-2-enyl diphosphate pocket. Residue His124 participates in dimethylallyl diphosphate binding. His124 is an isopentenyl diphosphate binding site. The active-site Proton donor is Glu126. Residue Thr169 coordinates (2E)-4-hydroxy-3-methylbut-2-enyl diphosphate. Cys199 serves as a coordination point for [4Fe-4S] cluster. (2E)-4-hydroxy-3-methylbut-2-enyl diphosphate contacts are provided by Ser227, Ser228, Asn229, and Ser271. Residues Ser227, Ser228, Asn229, and Ser271 each coordinate dimethylallyl diphosphate. Residues Ser227, Ser228, Asn229, and Ser271 each contribute to the isopentenyl diphosphate site.

It belongs to the IspH family. [4Fe-4S] cluster serves as cofactor.

It catalyses the reaction isopentenyl diphosphate + 2 oxidized [2Fe-2S]-[ferredoxin] + H2O = (2E)-4-hydroxy-3-methylbut-2-enyl diphosphate + 2 reduced [2Fe-2S]-[ferredoxin] + 2 H(+). The catalysed reaction is dimethylallyl diphosphate + 2 oxidized [2Fe-2S]-[ferredoxin] + H2O = (2E)-4-hydroxy-3-methylbut-2-enyl diphosphate + 2 reduced [2Fe-2S]-[ferredoxin] + 2 H(+). The protein operates within isoprenoid biosynthesis; dimethylallyl diphosphate biosynthesis; dimethylallyl diphosphate from (2E)-4-hydroxy-3-methylbutenyl diphosphate: step 1/1. It functions in the pathway isoprenoid biosynthesis; isopentenyl diphosphate biosynthesis via DXP pathway; isopentenyl diphosphate from 1-deoxy-D-xylulose 5-phosphate: step 6/6. In terms of biological role, catalyzes the conversion of 1-hydroxy-2-methyl-2-(E)-butenyl 4-diphosphate (HMBPP) into a mixture of isopentenyl diphosphate (IPP) and dimethylallyl diphosphate (DMAPP). Acts in the terminal step of the DOXP/MEP pathway for isoprenoid precursor biosynthesis. This is 4-hydroxy-3-methylbut-2-enyl diphosphate reductase from Xanthomonas axonopodis pv. citri (strain 306).